The chain runs to 194 residues: Protein GrpE (194 aa).

Positions 1–12 are enriched in polar residues; that stretch reads MSSKEQNTPNEQ. The interval 1-39 is disordered; the sequence is MSSKEQNTPNEQASDEIETEQAKNQGADTAAEAADQRDE.

Belongs to the GrpE family. In terms of assembly, homodimer.

It localises to the cytoplasm. Its function is as follows. Participates actively in the response to hyperosmotic and heat shock by preventing the aggregation of stress-denatured proteins, in association with DnaK and GrpE. It is the nucleotide exchange factor for DnaK and may function as a thermosensor. Unfolded proteins bind initially to DnaJ; upon interaction with the DnaJ-bound protein, DnaK hydrolyzes its bound ATP, resulting in the formation of a stable complex. GrpE releases ADP from DnaK; ATP binding to DnaK triggers the release of the substrate protein, thus completing the reaction cycle. Several rounds of ATP-dependent interactions between DnaJ, DnaK and GrpE are required for fully efficient folding. This is Protein GrpE from Erwinia tasmaniensis (strain DSM 17950 / CFBP 7177 / CIP 109463 / NCPPB 4357 / Et1/99).